Here is an 861-residue protein sequence, read N- to C-terminus: MDEQYNPREVEQTARTFWETNETFKVKEEPGKPKYYCLSMFPYPSGKLHMGHVRNYTIGDVISRYQRMQGKNVMQPMGWDAFGLPAENAAIANKSAPAKWTRSNIDYMKNQLKQLGFGYDWSRELATCDPEYYRWEQWFFARLYEKGLVYKKMSTVNWDPVDQTVLANEQVVDGRGWRSGALVEQKKIPQWFIRITDYAEELLNDLEDMEGWPEQVKTMQRNWIGKSVGTELTFPLKEQEGGLTVYTTRPDTLMGVSYMAVAAEHPLAKAAAERHRDVAEFVDQCRNSKVAEAELATMEKKGIDTGFKAIHPLTQEEIPVWVANFVLMDYGTGALMAVPGHDERDHEFAVKYKLPIKQVIAPNDSRDIDIQEQAFTEKGVLVSSGKYSGLTSEEAFEEIADYLEAQGIGKRTVNYRLRDWGVSRQRYWGAPIPMMTLEDGTEMPVPDDQLPVRLPEDVEMDGVQSPIKADPEWCKTEYNGQPATLETDTFDTFMESSWYYARFCSPNYDKGMLDPAAANYWLPVDQYIGGIEHAILHLLYARFFHKLLRDVGLVNSSEPFKRLLTQGMVLAETYYRNEANGGKTWYNPADVTVERDGKGQVVRAVLKSDGEPVEIGGVTKMSKSKNNGIDPQAIIDQHGADTVRLFMMFAAPPEQSLEWSDSGVEGAHRFLKRLWRMVNEHTAGGDAPAVDPANLNGAQKDLRRKTHETIAKVSDDISRRLTFNTAIAAVMELLNEVGRLSDDEPQSRAVRQEALDTAVLVLSPIVPHICHNLWQALGHSDAVVDASWPVADESAMVRSEIEVVLQVNGKVRAKENVPADIGKADLEKLALENENVMRFTDGKTVRKVIVVPGKLVNVVAN.

Positions 42–52 match the 'HIGH' region motif; it reads PYPSGKLHMGH. The 'KMSKS' region signature appears at 620–624; that stretch reads KMSKS. Lys-623 lines the ATP pocket.

Belongs to the class-I aminoacyl-tRNA synthetase family.

The protein localises to the cytoplasm. It carries out the reaction tRNA(Leu) + L-leucine + ATP = L-leucyl-tRNA(Leu) + AMP + diphosphate. The protein is Leucine--tRNA ligase of Marinobacter nauticus (strain ATCC 700491 / DSM 11845 / VT8) (Marinobacter aquaeolei).